The following is an 805-amino-acid chain: MNAVGSPEGQELQKLGSGAWDNPAYSGPPSPHGTLRVCTISSTGPLQPQPKKPEDEPQETAYRTQVSSCCLHICQGIRGLWGTTLTENTAENRELYIKTTLRELLVYIVFLVDICLLTYGMTSSSAYYYTKVMSELFLHTPSDTGVSFQAISSMADFWDFAQGPLLDSLYWTKWYNNQSLGHGSHSFIYYENMLLGVPRLRQLKVRNDSCVVHEDFREDILSCYDVYSPDKEEQLPFGPFNGTAWTYHSQDELGGFSHWGRLTSYSGGGYYLDLPGSRQGSAEALRALQEGLWLDRGTRVVFIDFSVYNANINLFCVLRLVVEFPATGGAIPSWQIRTVKLIRYVSNWDFFIVGCEVIFCVFIFYYVVEEILELHIHRLRYLSSIWNILDLVVILLSIVAVGFHIFRTLEVNRLMGKLLQQPNTYADFEFLAFWQTQYNNMNAVNLFFAWIKIFKYISFNKTMTQLSSTLARCAKDILGFAVMFFIVFFAYAQLGYLLFGTQVENFSTFIKCIFTQFRIILGDFDYNAIDNANRILGPAYFVTYVFFVFFVLLNMFLAIINDTYSEVKEELAGQKDELQLSDLLKQGYNKTLLRLRLRKERVSDVQKVLQGGEQEIQFEDFTNTLRELGHAEHEITELTATFTKFDRDGNRILDEKEQEKMRQDLEEERVALNTEIEKLGRSIVSSPQGKSGPEAARAGGWVSGEEFYMLTRRVLQLETVLEGVVSQIDAVGSKLKMLERKGWLAPSPGVKEQAIWKHPQPAPAVTPDPWGVQGGQESEVPYKREEEALEERRLSRGEIPTLQRS.

Positions 1 to 59 are disordered; it reads MNAVGSPEGQELQKLGSGAWDNPAYSGPPSPHGTLRVCTISSTGPLQPQPKKPEDEPQE. At 1–103 the chain is on the cytoplasmic side; the sequence is MNAVGSPEGQ…ELYIKTTLRE (103 aa). Residue Cys38 is the site of S-palmitoyl cysteine attachment. Residues 104 to 124 form a helical membrane-spanning segment; that stretch reads LLVYIVFLVDICLLTYGMTSS. The Extracellular portion of the chain corresponds to 125 to 356; the sequence is SAYYYTKVMS…NWDFFIVGCE (232 aa). Asn177 and Asn207 each carry an N-linked (GlcNAc...) asparagine glycan. Cys210 and Cys223 are disulfide-bonded. Asn241 is a glycosylation site (N-linked (GlcNAc...) asparagine). Residues 357-376 traverse the membrane as a helical segment; it reads VIFCVFIFYYVVEEILELHI. Residues Glu370 and Glu373 each coordinate Ca(2+). Topologically, residues 377–384 are cytoplasmic; it reads HRLRYLSS. Residues 385–405 traverse the membrane as a helical segment; sequence IWNILDLVVILLSIVAVGFHI. Asn387 and Asp390 together coordinate Ca(2+). At 406–433 the chain is on the extracellular side; the sequence is FRTLEVNRLMGKLLQQPNTYADFEFLAF. The helical transmembrane segment at 434–454 threads the bilayer; that stretch reads WQTQYNNMNAVNLFFAWIKIF. Topologically, residues 455–479 are cytoplasmic; it reads KYISFNKTMTQLSSTLARCAKDILG. The chain crosses the membrane as a helical span at residues 480-499; that stretch reads FAVMFFIVFFAYAQLGYLLF. Residues 500–511 are Extracellular-facing; it reads GTQVENFSTFIK. Asn505 carries an N-linked (GlcNAc...) asparagine glycan. An intramembrane region (pore-forming) is located at residues 512-526; it reads CIFTQFRIILGDFDY. The Extracellular portion of the chain corresponds to 527–536; sequence NAIDNANRIL. The helical transmembrane segment at 537–557 threads the bilayer; it reads GPAYFVTYVFFVFFVLLNMFL. Topologically, residues 558–805 are cytoplasmic; it reads AIINDTYSEV…RGEIPTLQRS (248 aa). Positions 633 to 668 constitute an EF-hand domain; sequence HEITELTATFTKFDRDGNRILDEKEQEKMRQDLEEE. Coiled coils occupy residues 650–686 and 700–740; these read NRIL…IVSS and GWVS…MLER. The tract at residues 704-763 is required for homooligomerization; that stretch reads GEEFYMLTRRVLQLETVLEGVVSQIDAVGSKLKMLERKGWLAPSPGVKEQAIWKHPQPAP. Residues 759 to 805 are disordered; it reads PQPAPAVTPDPWGVQGGQESEVPYKREEEALEERRLSRGEIPTLQRS. Residues 780 to 796 are compositionally biased toward basic and acidic residues; the sequence is VPYKREEEALEERRLSR.

The protein belongs to the polycystin family. In terms of assembly, oligomer. Functional PKD2L1 homotetramer can be formed either through C-terminal trimerization followed by N-terminal dimerization of a fourth subunit with a subunit in the trimer or through dimerization followed by trimerization. Heterotetramer with either PKD1L1, PKD1L3 or PKD1; the heterotetrameric complex contains three PKD1L2 chains plus one chain from another family member. Interacts with PKD1L1, forming a ciliary calcium channel. Interacts with PKD1L3, forming a cation channel that is activated by low extracellular pH. Interacts with PKD1; this heteromeric functional cation channels is opened by hypo-osmotic stimulation. Interacts with RACK1; inhibits the channel activity possibly by impairing localization to the cell membrane. Palmitoylation is important for expression at the cell membrane and for channel activity. In terms of tissue distribution, detected in taste bud cells in fungiform papillae (at protein level). Ubiquitous. Expressed in adult heart, skeletal muscle, brain, spleen, testis, retina and liver. Isoform 4 appears to be expressed only in transformed lymphoblasts.

The protein localises to the cell projection. Its subcellular location is the cilium membrane. The protein resides in the cell membrane. It localises to the cytoplasmic vesicle. The catalysed reaction is Ca(2+)(in) = Ca(2+)(out). It catalyses the reaction Na(+)(in) = Na(+)(out). It carries out the reaction K(+)(in) = K(+)(out). The enzyme catalyses Mg(2+)(in) = Mg(2+)(out). The non-selective cation channel is gated following an off-response property by acid: gated open after the removal of acid stimulus, but not during acid application. Channel activity is inhibited by phosphatidylinositol-4,5-bisphosphate (PIP2). Non-selective cation channel activity is substantially increased when either the extracellular or intracellular calcium-ion concentration is raised. Regulation of non-selective cation channel activity by external calcium is bimodal, first sensitizing and subsequently inactivating the current. Functionally, homotetrameric, non-selective cation channel that is permeable to sodium, potassium, magnesium and calcium. Also forms functionnal heteromeric channels with PKD1, PKD1L1 and PKD1L3. Pore-forming subunit of a heterotetrameric, non-selective cation channel, formed by PKD1L2 and PKD1L3, that is permeable to sodium, potassium, magnesium and calcium and which may act as a sour taste receptor in gustatory cells; however, its contribution to sour taste perception is unclear in vivo and may be indirect. The homomeric and heteromeric channels formed by PKD1L2 and PKD1L3 are activated by low pH and Ca(2+), but opens only when the extracellular pH rises again and after the removal of acid stimulus. Pore-forming subunit of a calcium-permeant ion channel formed by PKD1L2 and PKD1L1 in primary cilia, where it controls cilium calcium concentration, without affecting cytoplasmic calcium concentration, and regulates sonic hedgehog/SHH signaling and GLI2 transcription. The PKD1L1:PKD2L1 complex channel is mechanosensitive only at high pressures and is highly temperature sensitive. Pore-forming subunit of a calcium-permeant ion channel formed by PKD1L2 and PKD1 that produces a transient increase in intracellular calcium concentration upon hypo-osmotic stimulation (200 mOsm). May play a role in the perception of carbonation taste. May play a role in the sensory perception of water, via a mechanism that activates the channel in response to dilution of salivary bicarbonate and changes in salivary pH. In Homo sapiens (Human), this protein is Polycystin-2-like protein 1.